We begin with the raw amino-acid sequence, 204 residues long: Probable nicotinate-nucleotide adenylyltransferase (204 aa).

This sequence belongs to the NadD family.

It catalyses the reaction nicotinate beta-D-ribonucleotide + ATP + H(+) = deamido-NAD(+) + diphosphate. It participates in cofactor biosynthesis; NAD(+) biosynthesis; deamido-NAD(+) from nicotinate D-ribonucleotide: step 1/1. Catalyzes the reversible adenylation of nicotinate mononucleotide (NaMN) to nicotinic acid adenine dinucleotide (NaAD). The sequence is that of Probable nicotinate-nucleotide adenylyltransferase from Mycobacterium sp. (strain JLS).